The following is a 730-amino-acid chain: Polyphosphate kinase (730 aa).

Over residues 1–21 (MMRHDRNVTEIDAETRPDENL) the composition is skewed to basic and acidic residues. Residues 1-39 (MMRHDRNVTEIDAETRPDENLWHSGDSAVGAPPAATPAA) form a disordered region. Residue N86 coordinates ATP. Residues R423 and R453 each coordinate Mg(2+). Residue H483 is the Phosphohistidine intermediate of the active site. Positions 516, 612, and 640 each coordinate ATP.

This sequence belongs to the polyphosphate kinase 1 (PPK1) family. Requires Mg(2+) as cofactor. An intermediate of this reaction is the autophosphorylated ppk in which a phosphate is covalently linked to a histidine residue through a N-P bond.

The catalysed reaction is [phosphate](n) + ATP = [phosphate](n+1) + ADP. Catalyzes the reversible transfer of the terminal phosphate of ATP to form a long-chain polyphosphate (polyP). This chain is Polyphosphate kinase, found in Mycobacterium avium (strain 104).